The primary structure comprises 229 residues: MLEMQLFFVSYVLYGLGFVSLIFLPTEHQRLYYLHLVSVIIGLIANYEMKFNILLAMFHSAVHNLWPFLKNTGYDDTEKSVYDVFCHTIMMMLCYHRIYYSQNIVIDSEYLFHVLSVLFILGAMINCLVSHLIIDSHHAQLHSIFEYTTIFQAVSTGYWVATMLWYNNLNHQDFYYHWLLWITLMTTNWFIYKFWPKLVGISMRYKYVEAVFIICTWYSGVLSSQKISC.

7 helical membrane-spanning segments follow: residues 6–26 (LFFVSYVLYGLGFVSLIFLPT), 36–56 (LVSVIIGLIANYEMKFNILLA), 80–99 (SVYDVFCHTIMMMLCYHRIY), 114–134 (VLSVLFILGAMINCLVSHLII), 144–164 (IFEYTTIFQAVSTGYWVATML), 174–194 (FYYHWLLWITLMTTNWFIYKF), and 207–224 (YVEAVFIICTWYSGVLSS).

Belongs to the mimivirus L68/R809 family.

The protein localises to the membrane. This is an uncharacterized protein from Acanthamoeba polyphaga (Amoeba).